The chain runs to 374 residues: Cysteine-type anaerobic sulfatase-maturating enzyme (374 aa).

One can recognise a Radical SAM core domain in the interval 1-227; sequence MKSLSMLIKP…LNKLFDLWFK (227 aa). Residues C15 and C19 each contribute to the [4Fe-4S] cluster site. Y21 contributes to the S-adenosyl-L-methionine binding site. C22 lines the [4Fe-4S] cluster pocket. Residues G66, S122, R134, and L195 each coordinate S-adenosyl-L-methionine. Positions 255, 261, and 276 each coordinate [4Fe-4S] cluster. The active-site Proton acceptor is the D277. The [4Fe-4S] cluster site is built by C317, C320, C326, C330, and C348.

The protein belongs to the radical SAM superfamily. Anaerobic sulfatase-maturating enzyme family. Requires [4Fe-4S] cluster as cofactor.

The catalysed reaction is L-cysteinyl-[sulfatase] + S-adenosyl-L-methionine + H2O = 3-oxo-L-alanyl-[sulfatase] + hydrogen sulfide + 5'-deoxyadenosine + L-methionine + 2 H(+). Its pathway is protein modification; sulfatase oxidation. In terms of biological role, involved in 'Cys-type' sulfatase maturation under anaerobic conditions. Catalyzes the post-translational modification of cysteine into 3-oxoalanine (also known as C(alpha)-formylglycine (FGly)), by a free radical chemical mechanism initiated via the reductive cleavage of S-adenosyl-L-methionine (SAM). This is Cysteine-type anaerobic sulfatase-maturating enzyme from Clostridium novyi (strain NT).